Consider the following 279-residue polypeptide: Acyl-[acyl-carrier-protein]--UDP-N-acetylglucosamine O-acyltransferase (279 aa).

This sequence belongs to the transferase hexapeptide repeat family. LpxA subfamily. Homotrimer.

The protein resides in the cytoplasm. The catalysed reaction is a (3R)-hydroxyacyl-[ACP] + UDP-N-acetyl-alpha-D-glucosamine = a UDP-3-O-[(3R)-3-hydroxyacyl]-N-acetyl-alpha-D-glucosamine + holo-[ACP]. It functions in the pathway glycolipid biosynthesis; lipid IV(A) biosynthesis; lipid IV(A) from (3R)-3-hydroxytetradecanoyl-[acyl-carrier-protein] and UDP-N-acetyl-alpha-D-glucosamine: step 1/6. In terms of biological role, involved in the biosynthesis of lipid A, a phosphorylated glycolipid that anchors the lipopolysaccharide to the outer membrane of the cell. The chain is Acyl-[acyl-carrier-protein]--UDP-N-acetylglucosamine O-acyltransferase from Mesorhizobium japonicum (strain LMG 29417 / CECT 9101 / MAFF 303099) (Mesorhizobium loti (strain MAFF 303099)).